A 223-amino-acid chain; its full sequence is ATP synthase subunit a 1 (223 aa).

5 helical membrane-spanning segments follow: residues 20-40 (LTIATTWALMLVLVGGSAFAS), 78-98 (YLPYLGTLFIFIAFSNLCTII), 108-128 (LSTTAALAMSVFVAVPLFGIA), 174-194 (MILAILLTVTPFVFPVLMSVL), and 196-216 (LLTGMVQAYIFSILATVYISA).

Belongs to the ATPase A chain family. F-type ATPases have 2 components, CF(1) - the catalytic core - and CF(0) - the membrane proton channel. CF(1) has five subunits: alpha(3), beta(3), gamma(1), delta(1), epsilon(1). CF(0) has four main subunits: a, b, b' and c.

The protein localises to the cell inner membrane. Its function is as follows. Key component of the proton channel; it plays a direct role in the translocation of protons across the membrane. The polypeptide is ATP synthase subunit a 1 (Chlorobium luteolum (strain DSM 273 / BCRC 81028 / 2530) (Pelodictyon luteolum)).